The following is a 545-amino-acid chain: Membrane protein insertase YidC (545 aa).

Residues asparagine 6–aspartate 26 form a helical membrane-spanning segment. Residues serine 44 to threonine 65 are disordered. A run of 4 helical transmembrane segments spans residues leucine 346–leucine 366, glycine 424–leucine 444, leucine 461–methionine 481, and valine 504–glycine 524.

This sequence belongs to the OXA1/ALB3/YidC family. Type 1 subfamily. In terms of assembly, interacts with the Sec translocase complex via SecD. Specifically interacts with transmembrane segments of nascent integral membrane proteins during membrane integration.

Its subcellular location is the cell inner membrane. Functionally, required for the insertion and/or proper folding and/or complex formation of integral membrane proteins into the membrane. Involved in integration of membrane proteins that insert both dependently and independently of the Sec translocase complex, as well as at least some lipoproteins. Aids folding of multispanning membrane proteins. This Shewanella pealeana (strain ATCC 700345 / ANG-SQ1) protein is Membrane protein insertase YidC.